A 175-amino-acid chain; its full sequence is DASH complex subunit DAM1 (175 aa).

A disordered region spans residues 1–39 (MAPEDTNPQSSHRRTRSTSRSRPTTPLRPSSRSSFRSSA). Low complexity predominate over residues 20–39 (RSRPTTPLRPSSRSSFRSSA).

This sequence belongs to the DASH complex DAM1 family. As to quaternary structure, component of the DASH complex consisting of ASK1, DAD1, DAD2, DAD3, DAD4, DAM1, DUO1, HSK3, SPC19 and SPC34, with a stoichiometry of one copy of each subunit per complex. Multiple DASH complexes oligomerize to form a ring that encircles spindle microtubules and organizes the rod-like NDC80 complexes of the outer kinetochore. DASH complex oligomerization strengthens microtubule attachments. On cytoplasmic microtubules, DASH complexes appear to form patches instead of rings.

Its subcellular location is the chromosome. The protein localises to the centromere. It localises to the kinetochore. The protein resides in the cytoplasm. It is found in the cytoskeleton. Its subcellular location is the spindle. The protein localises to the nucleus. Component of the DASH complex that connects microtubules with kinetochores and couples microtubule depolymerisation to chromosome movement; it is involved in retrieving kinetochores to the spindle poles before their re-orientation on the spindle in early mitosis and allows microtubule depolymerization to pull chromosomes apart and resist detachment during anaphase. Kinetochores, consisting of a centromere-associated inner segment and a microtubule-contacting outer segment, play a crucial role in chromosome segregation by mediating the physical connection between centromeric DNA and microtubules. Kinetochores also serve as an input point for the spindle assembly checkpoint, which delays anaphase until all chromosomes have bioriented on the mitotic spindle. The polypeptide is DASH complex subunit DAM1 (Chaetomium thermophilum (strain DSM 1495 / CBS 144.50 / IMI 039719) (Thermochaetoides thermophila)).